The sequence spans 379 residues: Succinyl-diaminopimelate desuccinylase (379 aa).

H70 is a Zn(2+) binding site. D72 is a catalytic residue. D103 serves as a coordination point for Zn(2+). The active-site Proton acceptor is the E137. Residues E138, E166, and H352 each contribute to the Zn(2+) site.

It belongs to the peptidase M20A family. DapE subfamily. Homodimer. Zn(2+) is required as a cofactor. It depends on Co(2+) as a cofactor.

It carries out the reaction N-succinyl-(2S,6S)-2,6-diaminopimelate + H2O = (2S,6S)-2,6-diaminopimelate + succinate. It participates in amino-acid biosynthesis; L-lysine biosynthesis via DAP pathway; LL-2,6-diaminopimelate from (S)-tetrahydrodipicolinate (succinylase route): step 3/3. Catalyzes the hydrolysis of N-succinyl-L,L-diaminopimelic acid (SDAP), forming succinate and LL-2,6-diaminopimelate (DAP), an intermediate involved in the bacterial biosynthesis of lysine and meso-diaminopimelic acid, an essential component of bacterial cell walls. The chain is Succinyl-diaminopimelate desuccinylase from Burkholderia lata (strain ATCC 17760 / DSM 23089 / LMG 22485 / NCIMB 9086 / R18194 / 383).